We begin with the raw amino-acid sequence, 470 residues long: ATP synthase subunit beta (470 aa).

155–162 (GGAGVGKT) contributes to the ATP binding site.

This sequence belongs to the ATPase alpha/beta chains family. As to quaternary structure, F-type ATPases have 2 components, CF(1) - the catalytic core - and CF(0) - the membrane proton channel. CF(1) has five subunits: alpha(3), beta(3), gamma(1), delta(1), epsilon(1). CF(0) has three main subunits: a(1), b(2) and c(9-12). The alpha and beta chains form an alternating ring which encloses part of the gamma chain. CF(1) is attached to CF(0) by a central stalk formed by the gamma and epsilon chains, while a peripheral stalk is formed by the delta and b chains.

Its subcellular location is the cell inner membrane. It carries out the reaction ATP + H2O + 4 H(+)(in) = ADP + phosphate + 5 H(+)(out). In terms of biological role, produces ATP from ADP in the presence of a proton gradient across the membrane. The catalytic sites are hosted primarily by the beta subunits. The protein is ATP synthase subunit beta of Oleidesulfovibrio alaskensis (strain ATCC BAA-1058 / DSM 17464 / G20) (Desulfovibrio alaskensis).